Here is a 1073-residue protein sequence, read N- to C-terminus: Pleckstrin homology domain-containing family G member 5 (1073 aa).

Disordered regions lie at residues 1 to 28, 91 to 135, 217 to 261, 278 to 309, and 367 to 388; these read MGTGPGVSGRRAAARPSSELPSPDSQLL, VSTR…ARRR, PGDE…ESSL, GEAGIPGHEPPAPSSCSLPVGSSGGTSSGINE, and SWEEEEEDDEEDEESSGLRLED. 2 stretches are compositionally biased toward basic and acidic residues: residues 217 to 231 and 249 to 260; these read PGDEGKVEQGVKDSK and ERVDPQSRRESS. Acidic residues predominate over residues 367–381; sequence SWEEEEEDDEEDEES. A DH domain is found at 406 to 598; it reads HQQEAVWELL…ERFIHHVNTC (193 aa). The 101-residue stretch at 654-754 folds into the PH domain; sequence QLLLEGSLRM…WVDTIYNAQN (101 aa). Disordered regions lie at residues 762–818, 833–873, and 899–925; these read QLSA…TSDG, TLSS…GPVD, and PVVEPAPVPQTPSPQPSPRLRRRTPVQ. Positions 777–790 are enriched in acidic residues; sequence LEEEEDEQEEEGEE. Composition is skewed to polar residues over residues 791–809 and 844–864; these read SGTSAASSPTILRKSSNSL and VSSQSDESSLSNTASSVTPTS. Residue T793 is modified to Phosphothreonine. S798 carries the phosphoserine modification. Residues 900–915 show a composition bias toward pro residues; sequence VVEPAPVPQTPSPQPS. T909 carries the phosphothreonine modification. Phosphoserine is present on residues S911, S936, and S941. Residues 993 to 1046 are disordered; the sequence is MCDPCHGPQLSESENRPSHMTGGPADSARRRCREMPSGTMSRVQSEPPSGVSAQ. Residues 1030-1039 are compositionally biased toward polar residues; the sequence is GTMSRVQSEP.

In terms of assembly, interacts with GIPC1/synectin and RHOA. In terms of tissue distribution, expressed in neurons and glial cells of the peripheral nervous system, with highest levels of expression in the brain and sciatic nerve endoneurium. Isoform 2 is expressed at detectable levels only in malignant cells.

The protein resides in the cytoplasm. The protein localises to the perinuclear region. It localises to the cell membrane. It is found in the cell junction. Its subcellular location is the cell projection. The protein resides in the lamellipodium. Functionally, functions as a guanine exchange factor (GEF) for RAB26 and thus regulates autophagy of synaptic vesicles in axon terminal of motoneurons. Involved in the control of neuronal cell differentiation. Plays a role in angiogenesis through regulation of endothelial cells chemotaxis. Also affects the migration, adhesion, and matrix/bone degradation in macrophages and osteoclasts. The protein is Pleckstrin homology domain-containing family G member 5 (Plekhg5) of Mus musculus (Mouse).